A 463-amino-acid polypeptide reads, in one-letter code: Immune-associated nucleotide-binding protein 10 (463 aa).

The 209-residue stretch at 3-211 (EPIKNIVLVG…YTYQLHRKIK (209 aa)) folds into the AIG1-type G domain. Positions 12–19 (GRTGNGKS) are G1. Residues 12–20 (GRTGNGKSS) and serine 33 each bind GTP. The G2 stretch occupies residues 39 to 43 (GVTMI). The segment at 61 to 64 (DTPG) is G3. The tract at residues 131-134 (TGGD) is G4. The tract at residues 170-172 (DNK) is G5. Asparagine 171 serves as a coordination point for GTP. A coiled-coil region spans residues 173 to 308 (SKDEKKKVEQ…KQLIAQANRM (136 aa)).

The protein belongs to the TRAFAC class TrmE-Era-EngA-EngB-Septin-like GTPase superfamily. AIG1/Toc34/Toc159-like paraseptin GTPase family. IAN subfamily. In terms of tissue distribution, expressed in radicles of the germinating seeds.

The protein is Immune-associated nucleotide-binding protein 10 of Arabidopsis thaliana (Mouse-ear cress).